The following is a 485-amino-acid chain: Glutamyl-tRNA(Gln) amidotransferase subunit A (485 aa).

Residues Lys75 and Ser150 each act as charge relay system in the active site. Ser174 serves as the catalytic Acyl-ester intermediate.

The protein belongs to the amidase family. GatA subfamily. Heterotrimer of A, B and C subunits.

The enzyme catalyses L-glutamyl-tRNA(Gln) + L-glutamine + ATP + H2O = L-glutaminyl-tRNA(Gln) + L-glutamate + ADP + phosphate + H(+). Its function is as follows. Allows the formation of correctly charged Gln-tRNA(Gln) through the transamidation of misacylated Glu-tRNA(Gln) in organisms which lack glutaminyl-tRNA synthetase. The reaction takes place in the presence of glutamine and ATP through an activated gamma-phospho-Glu-tRNA(Gln). This Picosynechococcus sp. (strain ATCC 27264 / PCC 7002 / PR-6) (Agmenellum quadruplicatum) protein is Glutamyl-tRNA(Gln) amidotransferase subunit A.